Reading from the N-terminus, the 95-residue chain is Aspartyl/glutamyl-tRNA(Asn/Gln) amidotransferase subunit C (95 aa).

It belongs to the GatC family. In terms of assembly, heterotrimer of A, B and C subunits.

The catalysed reaction is L-glutamyl-tRNA(Gln) + L-glutamine + ATP + H2O = L-glutaminyl-tRNA(Gln) + L-glutamate + ADP + phosphate + H(+). It catalyses the reaction L-aspartyl-tRNA(Asn) + L-glutamine + ATP + H2O = L-asparaginyl-tRNA(Asn) + L-glutamate + ADP + phosphate + 2 H(+). Functionally, allows the formation of correctly charged Asn-tRNA(Asn) or Gln-tRNA(Gln) through the transamidation of misacylated Asp-tRNA(Asn) or Glu-tRNA(Gln) in organisms which lack either or both of asparaginyl-tRNA or glutaminyl-tRNA synthetases. The reaction takes place in the presence of glutamine and ATP through an activated phospho-Asp-tRNA(Asn) or phospho-Glu-tRNA(Gln). The sequence is that of Aspartyl/glutamyl-tRNA(Asn/Gln) amidotransferase subunit C from Sinorhizobium fredii (strain NBRC 101917 / NGR234).